A 146-amino-acid chain; its full sequence is Leghemoglobin (146 aa).

A Globin domain is found at 3 to 146; the sequence is AFTEKQEALV…FAAGIKKAYA (144 aa). Tyr26 and Tyr31 each carry nitrated tyrosine. Position 46 (Ser46) interacts with heme b. Residue Ser46 is modified to Phosphoserine. His62 contributes to the O2 binding site. 2 residues coordinate heme b: His93 and Lys96. The residue at position 134 (Tyr134) is a Nitrated tyrosine.

Belongs to the plant globin family. In terms of assembly, monomer. Nitrated mainly at Tyr-31 and, to a lower extent, at Tyr-26 and Tyr-134, in effective nodules and particularly in hypoxic conditions; this mechanism may play a protective role in the symbiosis by buffering toxic peroxynitrite NO(2)(-). Nitration level decrease during nodule senescence. Post-translationally, phosphorylation at Ser-46 disrupts the molecular environment of its porphyrin ring oxygen binding pocket, thus leading to a reduced oxygen consumption and to the delivery of oxygen O(2) to symbiosomes. Root nodules.

The protein resides in the cytoplasm. It is found in the cytosol. It localises to the nucleus. Its function is as follows. Leghemoglobin that reversibly binds oxygen O(2) through a pentacoordinated heme iron. In root nodules, facilitates the diffusion of oxygen to the bacteroids while preventing the bacterial nitrogenase from being inactivated by buffering dioxygen, nitric oxide and carbon monoxide, and promoting the formation of reactive oxygen species (ROS, e.g. H(2)O(2)). This role is essential for symbiotic nitrogen fixation (SNF). The polypeptide is Leghemoglobin (Phaseolus vulgaris (Kidney bean)).